Consider the following 444-residue polypeptide: MEVKAKQLDSVNATASVKIPSGMIKSEVENLAKKASKSVKMDGFRPGKVPVSAVLKRYERELTQDAEQNLFKSAVNSALQELKKESKELVGEPYFEKFDRKDGEIIAELILSFKPEIKLDGYEKLIPEYQTPKVNKKEIDEKKDELLKRFSTPEAIKTKRALKEGDFAKFDFEGFVDDKAFEGGKAENYVLEIGSKQFIPGFEDGMVGMKIGEEKDIKVTFPKEYGAAHLADKDAVFKVKLHEIQELKIPELDDEMLKKLLPGEEKASVEVLDEKLKEQIKNEKLFKLVNDELKGKFADALIEKYNFDLPKGIVEQETDMQMRAAFNTFSEKEIEELKASKEKYQEKRDSFKEEAQKSVKLTFIIDELAKLRKIEVNDQELIQAIYFEAYRYGMNPKEHLENYKKQGALPAVKMALIEEKLFNDIFMPKTEKSEKASKKEKEDK.

The PPIase FKBP-type domain maps to 165–250 (GDFAKFDFEG…LHEIQELKIP (86 aa)).

The protein belongs to the FKBP-type PPIase family. Tig subfamily.

It localises to the cytoplasm. It carries out the reaction [protein]-peptidylproline (omega=180) = [protein]-peptidylproline (omega=0). Its function is as follows. Involved in protein export. Acts as a chaperone by maintaining the newly synthesized protein in an open conformation. Functions as a peptidyl-prolyl cis-trans isomerase. This is Trigger factor from Campylobacter jejuni subsp. jejuni serotype O:23/36 (strain 81-176).